Consider the following 100-residue polypeptide: Urease subunit gamma (100 aa).

Belongs to the urease gamma subunit family. Heterotrimer of UreA (gamma), UreB (beta) and UreC (alpha) subunits. Three heterotrimers associate to form the active enzyme.

The protein resides in the cytoplasm. It catalyses the reaction urea + 2 H2O + H(+) = hydrogencarbonate + 2 NH4(+). It functions in the pathway nitrogen metabolism; urea degradation; CO(2) and NH(3) from urea (urease route): step 1/1. This Bradyrhizobium diazoefficiens (strain JCM 10833 / BCRC 13528 / IAM 13628 / NBRC 14792 / USDA 110) protein is Urease subunit gamma.